We begin with the raw amino-acid sequence, 252 residues long: 5-oxoprolinase subunit A 1 (252 aa).

Belongs to the LamB/PxpA family. As to quaternary structure, forms a complex composed of PxpA, PxpB and PxpC.

The catalysed reaction is 5-oxo-L-proline + ATP + 2 H2O = L-glutamate + ADP + phosphate + H(+). Functionally, catalyzes the cleavage of 5-oxoproline to form L-glutamate coupled to the hydrolysis of ATP to ADP and inorganic phosphate. The chain is 5-oxoprolinase subunit A 1 from Pseudomonas aeruginosa (strain ATCC 15692 / DSM 22644 / CIP 104116 / JCM 14847 / LMG 12228 / 1C / PRS 101 / PAO1).